Consider the following 64-residue polypeptide: Protein YnhH (64 aa).

This Escherichia coli (strain K12) protein is Protein YnhH.